The primary structure comprises 490 residues: Selenium-binding protein 1 (490 aa).

A2 carries the N-acetylalanine modification. 2 residues coordinate selenite: C21 and C22.

This sequence belongs to the selenium-binding protein family. In terms of assembly, interacts with GRXS14 and GRXS16. Interacts with DALL3. In terms of tissue distribution, expressed in seedlings, roots, leaves, stems and flowers.

Functionally, binds cadmium and mediates lower sensitivity to stress requiring glutathione (GSH) for tolerance (e.g. cadmium, selenate, and hydrogen peroxide excess). Probably helps to detoxify cadmium potentially through direct binding. Binds selenium, cadmium, zinc and nickel in vitro. This is Selenium-binding protein 1 from Arabidopsis thaliana (Mouse-ear cress).